The chain runs to 373 residues: tRNA pseudouridine synthase Pus10 (373 aa).

The Nucleophile role is filled by Asp-197. 2 residues coordinate substrate: Tyr-265 and Tyr-336.

Belongs to the pseudouridine synthase Pus10 family.

The enzyme catalyses uridine(54) in tRNA = pseudouridine(54) in tRNA. It catalyses the reaction uridine(55) in tRNA = pseudouridine(55) in tRNA. In terms of biological role, responsible for synthesis of pseudouridine from uracil-54 and uracil-55 in the psi GC loop of transfer RNAs. The chain is tRNA pseudouridine synthase Pus10 from Korarchaeum cryptofilum (strain OPF8).